The primary structure comprises 186 residues: ATP synthase subunit delta (186 aa).

Belongs to the ATPase delta chain family. F-type ATPases have 2 components, F(1) - the catalytic core - and F(0) - the membrane proton channel. F(1) has five subunits: alpha(3), beta(3), gamma(1), delta(1), epsilon(1). CF(0) has four main subunits: a(1), b(1), b'(1) and c(10-14). The alpha and beta chains form an alternating ring which encloses part of the gamma chain. F(1) is attached to F(0) by a central stalk formed by the gamma and epsilon chains, while a peripheral stalk is formed by the delta, b and b' chains.

The protein localises to the cell inner membrane. F(1)F(0) ATP synthase produces ATP from ADP in the presence of a proton or sodium gradient. F-type ATPases consist of two structural domains, F(1) containing the extramembraneous catalytic core and F(0) containing the membrane proton channel, linked together by a central stalk and a peripheral stalk. During catalysis, ATP synthesis in the catalytic domain of F(1) is coupled via a rotary mechanism of the central stalk subunits to proton translocation. Functionally, this protein is part of the stalk that links CF(0) to CF(1). It either transmits conformational changes from CF(0) to CF(1) or is implicated in proton conduction. This Rhodospirillum rubrum (strain ATCC 11170 / ATH 1.1.1 / DSM 467 / LMG 4362 / NCIMB 8255 / S1) protein is ATP synthase subunit delta.